We begin with the raw amino-acid sequence, 509 residues long: Putative aldehyde dehydrogenase family 7 member A1 homolog (509 aa).

Position 244–249 (244–249 (GSTEVG)) interacts with NAD(+). Glu-266 serves as the catalytic Proton acceptor. The Nucleophile role is filled by Cys-300.

Belongs to the aldehyde dehydrogenase family. In terms of assembly, homotetramer.

The enzyme catalyses an aldehyde + NAD(+) + H2O = a carboxylate + NADH + 2 H(+). The sequence is that of Putative aldehyde dehydrogenase family 7 member A1 homolog from Dictyostelium discoideum (Social amoeba).